Consider the following 108-residue polypeptide: uncharacterized protein (108 aa).

A helical transmembrane segment spans residues 72-94; that stretch reads LGLHTSVFFFLRIVCMSSAASVF.

Its subcellular location is the membrane. This is an uncharacterized protein from Saccharomyces cerevisiae (strain ATCC 204508 / S288c) (Baker's yeast).